Consider the following 441-residue polypeptide: Amino-acid acetyltransferase (441 aa).

The region spanning 295-434 is the N-acetyltransferase domain; sequence EQIRRANIND…QALYNYQRRS (140 aa).

The protein belongs to the acetyltransferase family. ArgA subfamily. In terms of assembly, homohexamer.

The protein localises to the cytoplasm. It carries out the reaction L-glutamate + acetyl-CoA = N-acetyl-L-glutamate + CoA + H(+). It participates in amino-acid biosynthesis; L-arginine biosynthesis; N(2)-acetyl-L-ornithine from L-glutamate: step 1/4. This chain is Amino-acid acetyltransferase, found in Edwardsiella ictaluri (strain 93-146).